Reading from the N-terminus, the 330-residue chain is Inactive hydroxysteroid dehydrogenase-like protein 1 (330 aa).

Ala2 is modified (N-acetylalanine). Residues 2–82 (AAVDSFYLLY…SGATDGIGKA (81 aa)) are required for mitochondria translocation. NADP(+)-binding positions include 74–80 (GATDGIG), Asp125, and Lys222.

Belongs to the short-chain dehydrogenases/reductases (SDR) family. 17-beta-HSD 3 subfamily. As to quaternary structure, interacts with STYXL1. As to expression, highly expressed in testis and ovary. Also detected in thyroid, spinal cord, adrenal gland, heart, placenta, skeletal muscle, small intestine, colon, spleen, prostate and pancreas.

It is found in the mitochondrion. The protein is Inactive hydroxysteroid dehydrogenase-like protein 1 (HSDL1) of Homo sapiens (Human).